A 456-amino-acid polypeptide reads, in one-letter code: Sulfate adenylyltransferase (456 aa).

It belongs to the sulfate adenylyltransferase family.

The enzyme catalyses sulfate + ATP + H(+) = adenosine 5'-phosphosulfate + diphosphate. The protein operates within sulfur metabolism; hydrogen sulfide biosynthesis; sulfite from sulfate: step 1/3. The chain is Sulfate adenylyltransferase (sat) from Archaeoglobus fulgidus (strain ATCC 49558 / DSM 4304 / JCM 9628 / NBRC 100126 / VC-16).